Reading from the N-terminus, the 583-residue chain is MPRGLELLIAQTILQGFDAQYGRFLEVTSGAQQRFEQADWHAVQQAMKSRIHLYDHHVGLVVEQLRCITDGKSTDADFLLRVKEHYTRLLPDYPRFEIAESFFNSVYCRLFDHRSLTPERLFIFSSQPERRFRTIPRPLAKDFFPDHGWETLLMRMLSDLPLRLPWQNKSRDIRYIIAHLTETLGEDALPRCHVQVANELFYRNKAAWLVGKLTTPDGTLPFLLPIHRTDEGELFVDTCLTTTAEASIVFGFARSYFMVYAPLPAALVEWLREILPGKTTAELYMAIGCQKHAKTESYREYLCYLTESDEKFIEAPGIRGMVMLVFTLPGFDRVFKIIKDKFAPQKEMSAAHVRACYQLVKEHDRVGRMADTQEFENFVLDKRQIDPALMALLRQEVPEKITDLGEHIVIRHLYIERRMVPLNIWLEQVEGQQLRDAIEEYGNAIRQLAAANIFPGDMLFKNFGVTRHGRVVFYDYDEICYMTEVNFRDIPPARYPEDELASEPWYSVSPGDVFPEEFRHWLCADPRIGPLFEEMHADLFRADYWRALQTRIKEGHVEDVYAYRRRQRFSVRYGAISSTANSS.

ATP contacts are provided by residues 315–321 (APGIRGM) and K336. Residue D371 is part of the active site.

Belongs to the AceK family.

It is found in the cytoplasm. It carries out the reaction L-seryl-[isocitrate dehydrogenase] + ATP = O-phospho-L-seryl-[isocitrate dehydrogenase] + ADP + H(+). Its function is as follows. Bifunctional enzyme which can phosphorylate or dephosphorylate isocitrate dehydrogenase (IDH) on a specific serine residue. This is a regulatory mechanism which enables bacteria to bypass the Krebs cycle via the glyoxylate shunt in response to the source of carbon. When bacteria are grown on glucose, IDH is fully active and unphosphorylated, but when grown on acetate or ethanol, the activity of IDH declines drastically concomitant with its phosphorylation. This chain is Isocitrate dehydrogenase kinase/phosphatase, found in Salmonella heidelberg (strain SL476).